An 87-amino-acid polypeptide reads, in one-letter code: Small ribosomal subunit protein uS17 (87 aa).

This sequence belongs to the universal ribosomal protein uS17 family. As to quaternary structure, part of the 30S ribosomal subunit.

Its function is as follows. One of the primary rRNA binding proteins, it binds specifically to the 5'-end of 16S ribosomal RNA. The protein is Small ribosomal subunit protein uS17 of Thiobacillus denitrificans (strain ATCC 25259 / T1).